The primary structure comprises 411 residues: Inhibin beta B chain (411 aa).

Residues 1–28 (MDGLPGRALGAACLLLLVAGWLGPEAWG) form the signal peptide. Residues 28 to 69 (GSPTPPPSPAAPPPPPPPGAPGGSQDTCTSCGGGGGGFRRPE) are disordered. Residues 29–296 (SPTPPPSPAA…GDSRHRIRKR (268 aa)) constitute a propeptide that is removed on maturation. Residues 30–47 (PTPPPSPAAPPPPPPPGA) are compositionally biased toward pro residues. A glycan (N-linked (GlcNAc...) asparagine) is linked at N97. Disulfide bonds link C300–C308, C307–C376, C336–C408, and C340–C410.

Belongs to the TGF-beta family. In terms of assembly, dimeric, linked by one or more disulfide bonds. Inhibin B is a dimer of alpha and beta-B. Activin B is a homodimer of beta-B. Activin AB is a dimer of beta-A and beta-B. Interacts with FST and FSTL3. Activin B interacts with BMPR2. As to expression, uterus, testis, ovary, lung, kidney, brain, CJ7 embryonic stem cells, and possibly in liver.

The protein localises to the secreted. In terms of biological role, inhibins and activins inhibit and activate, respectively, the secretion of follitropin by the pituitary gland. Inhibins/activins are involved in regulating a number of diverse functions such as hypothalamic and pituitary hormone secretion, gonadal hormone secretion, germ cell development and maturation, erythroid differentiation, insulin secretion, nerve cell survival, embryonic axial development or bone growth, depending on their subunit composition. Inhibins appear to oppose the functions of activins. Its function is as follows. Activin B is a dimer of alpha and beta-B that plays a role in several essential biological processes including embryonic development, stem cell maintenance and differentiation, haematopoiesis, cell proliferation and wound healing. Signals through type I receptor ACVR1C, abundantly expressed in pancreatic beta cells, and type II receptors like ACVR2A. Upon ligand binding, these receptors phosphorylate intracellular signaling mediators SMAD2 and SMAD3, which form a complex with SMAD4, translocate to the nucleus, and regulate gene expression. Plays a crucial role in the induction of hepcidin by inflammation through activation of ACVR1C and subsequent phosphorylation of SMAD1/5/8. Regulates adipocyte lipid metabolism by decreasing non-esterified fatty acids and glycerol release and increases intracellular triglyceride content. Stimulates wound healing by promoting cell migration and hair follicle regeneration through the JNK and ERK signaling pathways downstream of RHOA. Inhibin B is a dimer of alpha and beta-B that plays a crucial role in the regulation of the reproductive system by inhibiting the secretion of follicle-stimulating hormone (FSH) from the anterior pituitary gland. Thereby, maintains reproductive homeostasis in both males and females. Acts as a more potent suppressor of FSH release than inhibin A. Functions as competitive receptor antagonist binding activin type II receptors with high affinity in the presence of the TGF-beta type III coreceptor/TGFBR3L. The protein is Inhibin beta B chain (Inhbb) of Mus musculus (Mouse).